The sequence spans 763 residues: Probable ubiquitin carboxyl-terminal hydrolase MINDY-4 (763 aa).

S143 carries the phosphoserine modification. A disordered region spans residues 154-368 (SSKRSSHKSR…SQPASLRKNQ (215 aa)). Residues 180–202 (EKTDKLPMSEPSLDTKRMGEKVR) are compositionally biased toward basic and acidic residues. A phosphoserine mark is found at S220 and S224. A compositionally biased stretch (polar residues) spans 252 to 261 (ELSTHTSTCP). Residues 267–278 (PASSTASTSRSP) show a composition bias toward low complexity. Position 296 is a phosphoserine (S296). Positions 346–355 (TQERPERAFE) are enriched in basic and acidic residues. Over residues 357-368 (QGSQPASLRKNQ) the composition is skewed to polar residues. Residue C463 is the Nucleophile of the active site. H683 serves as the catalytic Proton acceptor.

The protein belongs to the MINDY deubiquitinase family. FAM188 subfamily.

It catalyses the reaction Thiol-dependent hydrolysis of ester, thioester, amide, peptide and isopeptide bonds formed by the C-terminal Gly of ubiquitin (a 76-residue protein attached to proteins as an intracellular targeting signal).. Its function is as follows. Probable hydrolase that can remove 'Lys-48'-linked conjugated ubiquitin from proteins. In Bos taurus (Bovine), this protein is Probable ubiquitin carboxyl-terminal hydrolase MINDY-4 (MINDY4).